Consider the following 831-residue polypeptide: Glucan 1,3-beta-glucosidase D (831 aa).

The segment covering 1-21 (MPSQSRSRDRYGRDSDRDRSR) has biased composition (basic and acidic residues). Disordered stretches follow at residues 1 to 246 (MPSQ…RGQS) and 261 to 288 (APDM…SDGS). Topologically, residues 1–300 (MPSQSRSRDR…LTPFWKRKKW (300 aa)) are cytoplasmic. Acidic residues predominate over residues 32–41 (EDDDDDDDFD). Composition is skewed to basic and acidic residues over residues 42–70 (DNPR…HDDY), 78–94 (EPRR…ERAR), and 151–177 (DAAR…HKST). Residues 178 to 195 (DSSNSSAGLLNANALAKL) are compositionally biased toward low complexity. Composition is skewed to basic and acidic residues over residues 197–216 (AQHE…EAKA) and 275–286 (PPRERRWEKDSD). Residues 301-321 (WWIGAIVLVIVVIIIVVAVVV) traverse the membrane as a helical; Signal-anchor for type II membrane protein segment. At 322–831 (SNNKKSDSDS…PSFGNLPEYY (510 aa)) the chain is on the extracellular side. The interval 325 to 360 (KKSDSDSDSDSNSGSSDSWGGDKSSLNGLDHDSIPK) is disordered. Positions 334-350 (DSNSGSSDSWGGDKSSL) are enriched in low complexity. N-linked (GlcNAc...) asparagine glycosylation is found at asparagine 379, asparagine 396, and asparagine 547. Glutamate 598 acts as the Proton donor in catalysis. Asparagine 611, asparagine 637, asparagine 670, and asparagine 690 each carry an N-linked (GlcNAc...) asparagine glycan. Glutamate 703 functions as the Nucleophile in the catalytic mechanism.

Belongs to the glycosyl hydrolase 5 (cellulase A) family.

Its subcellular location is the cell membrane. It carries out the reaction Successive hydrolysis of beta-D-glucose units from the non-reducing ends of (1-&gt;3)-beta-D-glucans, releasing alpha-glucose.. Its function is as follows. Glucosidase involved in the degradation of cellulosic biomass. Active on lichenan. This is Glucan 1,3-beta-glucosidase D (exgD) from Emericella nidulans (strain FGSC A4 / ATCC 38163 / CBS 112.46 / NRRL 194 / M139) (Aspergillus nidulans).